We begin with the raw amino-acid sequence, 261 residues long: Prostatic glandular kallikrein-6 (261 aa).

The signal sequence occupies residues 1–18; that stretch reads MWLLILFLILSLGWNDAA. Positions 19–24 are cleaved as a propeptide — activation peptide; the sequence is PPGQSR. One can recognise a Peptidase S1 domain in the interval 25 to 258; sequence IIGGFNCEKN…FTSWMKKVMK (234 aa). 5 disulfides stabilise this stretch: Cys31–Cys173, Cys50–Cys66, Cys152–Cys219, Cys184–Cys198, and Cys209–Cys234. His65 (charge relay system) is an active-site residue. The N-linked (GlcNAc...) asparagine glycan is linked to Asn108. Asp120 (charge relay system) is an active-site residue. The active-site Charge relay system is the Ser213.

This sequence belongs to the peptidase S1 family. Kallikrein subfamily.

It carries out the reaction Preferential cleavage of Arg-|-Xaa bonds in small molecule substrates. Highly selective action to release kallidin (lysyl-bradykinin) from kininogen involves hydrolysis of Met-|-Xaa or Leu-|-Xaa.. In terms of biological role, glandular kallikreins cleave Met-Lys and Arg-Ser bonds in kininogen to release Lys-bradykinin. The protein is Prostatic glandular kallikrein-6 (Klk6) of Rattus norvegicus (Rat).